The following is a 142-amino-acid chain: Movement protein (142 aa).

The disordered stretch occupies residues 1–142 (MDLPEDQARF…LDRSESLSRY (142 aa)). 2 stretches are compositionally biased toward polar residues: residues 9 to 22 (RFTNSYSLRTTSME) and 33 to 43 (LYQSASRSQMA). Residues 50–62 (SIISRTSSWRTSP) are compositionally biased toward low complexity. Polar residues-rich tracts occupy residues 74-95 (MNSILTSRTQQSSPKLTNSASP) and 113-124 (TTLQRTNSGFST). Residues 125–142 (KETEMPRLLDRSESLSRY) are compositionally biased toward basic and acidic residues.

Belongs to the luteoviruses movement protein family.

Functionally, transports viral genome to neighboring plant cells directly through plasmosdesmata, without any budding. The movement protein allows efficient cell to cell propagation, by bypassing the host cell wall barrier. This Cicer arietinum (Chickpea) protein is Movement protein.